Consider the following 221-residue polypeptide: MEYLTHSLIAKSEARQIVNKLKAEKLSWQDGKKTAGSHASEKKSNFQLDKNSKLSIKLRDIIVNKIISNPLLKSFTLPSLIHGVMFTQSLAGHHYGSHIDNPYMPSGRSDLSFTLFLNAPEDYEGGELCIQTINKTEKIKLSAGEMIIYPSTQLHSVAEVKDGERHVCVGWIQSYVQNNEDRNFLFGLDAGAKGLLAKHGRSDELDLIFQAYSNILRRLGD.

The Fe2OG dioxygenase domain occupies 80–174 (LIHGVMFTQS…RHVCVGWIQS (95 aa)). His98, Asp100, and His155 together coordinate Fe cation. Position 165 (Arg165) interacts with 2-oxoglutarate.

It depends on Fe(2+) as a cofactor. L-ascorbate serves as cofactor.

In Prochlorococcus marinus (strain NATL2A), this protein is PKHD-type hydroxylase PMN2A_0775.